The primary structure comprises 392 residues: INCREASED PETAL GROWTH ANISOTROPY 1-like protein 1 (392 aa).

Residues 11–52 (LLRLVKELQAYLVRNDKLEKENHELRQEVARLRAQVSNLKSH) are a coiled coil. Polar residues-rich tracts occupy residues 65–76 (QSSYDGSNTDGS) and 100–109 (PTIQGQSTAT). The tract at residues 65 to 128 (QSSYDGSNTD…SKRTLGKRSV (64 aa)) is disordered. Positions 269-299 (KDSLTQALQRIQSLQDRLEESVNNTEKMRDS) form a coiled coil.

It belongs to the IPGA1 family.

The protein localises to the cytoplasm. It is found in the cytoskeleton. Microtubule-associated protein probably involved in the regulation of microtubule organization. The chain is INCREASED PETAL GROWTH ANISOTROPY 1-like protein 1 from Arabidopsis thaliana (Mouse-ear cress).